Here is a 297-residue protein sequence, read N- to C-terminus: Formamidopyrimidine-DNA glycosylase (297 aa).

Pro2 functions as the Schiff-base intermediate with DNA in the catalytic mechanism. Glu3 functions as the Proton donor in the catalytic mechanism. The active-site Proton donor; for beta-elimination activity is Lys58. Residues His104, Arg127, and Lys170 each coordinate DNA. The segment at 261 to 297 adopts an FPG-type zinc-finger fold; the sequence is NVYDREGEACRTPGCTGTVERMTQAGRSTFHCPQCQR. The active-site Proton donor; for delta-elimination activity is Arg287.

This sequence belongs to the FPG family. In terms of assembly, monomer. Requires Zn(2+) as cofactor.

The catalysed reaction is Hydrolysis of DNA containing ring-opened 7-methylguanine residues, releasing 2,6-diamino-4-hydroxy-5-(N-methyl)formamidopyrimidine.. It carries out the reaction 2'-deoxyribonucleotide-(2'-deoxyribose 5'-phosphate)-2'-deoxyribonucleotide-DNA = a 3'-end 2'-deoxyribonucleotide-(2,3-dehydro-2,3-deoxyribose 5'-phosphate)-DNA + a 5'-end 5'-phospho-2'-deoxyribonucleoside-DNA + H(+). Involved in base excision repair of DNA damaged by oxidation or by mutagenic agents. Acts as a DNA glycosylase that recognizes and removes damaged bases. Has a preference for oxidized purines, such as 7,8-dihydro-8-oxoguanine (8-oxoG). Has AP (apurinic/apyrimidinic) lyase activity and introduces nicks in the DNA strand. Cleaves the DNA backbone by beta-delta elimination to generate a single-strand break at the site of the removed base with both 3'- and 5'-phosphates. This chain is Formamidopyrimidine-DNA glycosylase, found in Allorhizobium ampelinum (strain ATCC BAA-846 / DSM 112012 / S4) (Agrobacterium vitis (strain S4)).